The chain runs to 175 residues: ATP synthase subunit b (175 aa).

The chain crosses the membrane as a helical span at residues 22 to 44 (MLVQLFFFLILLALLKKFAWGPL).

It belongs to the ATPase B chain family. In terms of assembly, F-type ATPases have 2 components, F(1) - the catalytic core - and F(0) - the membrane proton channel. F(1) has five subunits: alpha(3), beta(3), gamma(1), delta(1), epsilon(1). F(0) has three main subunits: a(1), b(2) and c(10-14). The alpha and beta chains form an alternating ring which encloses part of the gamma chain. F(1) is attached to F(0) by a central stalk formed by the gamma and epsilon chains, while a peripheral stalk is formed by the delta and b chains.

It localises to the cell membrane. F(1)F(0) ATP synthase produces ATP from ADP in the presence of a proton or sodium gradient. F-type ATPases consist of two structural domains, F(1) containing the extramembraneous catalytic core and F(0) containing the membrane proton channel, linked together by a central stalk and a peripheral stalk. During catalysis, ATP synthesis in the catalytic domain of F(1) is coupled via a rotary mechanism of the central stalk subunits to proton translocation. Functionally, component of the F(0) channel, it forms part of the peripheral stalk, linking F(1) to F(0). In Oceanobacillus iheyensis (strain DSM 14371 / CIP 107618 / JCM 11309 / KCTC 3954 / HTE831), this protein is ATP synthase subunit b.